The sequence spans 235 residues: Carboxy-S-adenosyl-L-methionine synthase (235 aa).

S-adenosyl-L-methionine contacts are provided by residues Tyr35, 60-62 (GCS), 83-84 (DN), Asn124, and Arg191.

This sequence belongs to the class I-like SAM-binding methyltransferase superfamily. Cx-SAM synthase family. In terms of assembly, homodimer.

It catalyses the reaction prephenate + S-adenosyl-L-methionine = carboxy-S-adenosyl-L-methionine + 3-phenylpyruvate + H2O. Catalyzes the conversion of S-adenosyl-L-methionine (SAM) to carboxy-S-adenosyl-L-methionine (Cx-SAM). In Campylobacter jejuni subsp. jejuni serotype O:23/36 (strain 81-176), this protein is Carboxy-S-adenosyl-L-methionine synthase.